The following is a 55-amino-acid chain: Methylmalonyl-CoA decarboxylase subunit epsilon (55 aa).

In terms of assembly, the methylmalonyl-CoA decarboxylase is composed of five subunits: the carboxyltransferase alpha subunit (MmdA), the tunnel beta subunit (MmdB), the biotin-containing gamma subunit (MmdC), and the delta (MmdD) and epsilon (MmdE) subunits.

The protein resides in the cell membrane. The enzyme catalyses (S)-methylmalonyl-CoA + Na(+)(in) + H(+)(out) = propanoyl-CoA + Na(+)(out) + CO2. With respect to regulation, completely inhibited by avidin. Its function is as follows. Subunit of the sodium ion pump methylmalonyl-CoA decarboxylase, which converts the chemical energy of a decarboxylation reaction into an electrochemical gradient of Na(+) ions across the cytoplasmic membrane, thereby creating a sodium ion motive force that is used for ATP synthesis. The epsilon subunit seems not important for the catalysis of either decarboxylation or Na(+) transport, but it improves binding of the alpha subunit and plays an important role in stabilizing the methylmalonyl-CoA-decarboxylase enzyme complex. Can also convert malonyl-CoA into acetyl-CoA. The protein is Methylmalonyl-CoA decarboxylase subunit epsilon of Veillonella parvula (Staphylococcus parvulus).